A 481-amino-acid polypeptide reads, in one-letter code: Inosine-5'-monophosphate dehydrogenase (481 aa).

2 consecutive CBS domains span residues 92 to 148 and 152 to 209; these read VIND…SKKV and MTKM…PEAN. Residues aspartate 244 and 293-295 contribute to the NAD(+) site; that span reads GIG. K(+)-binding residues include glycine 295 and glycine 297. Serine 298 is an IMP binding site. Residue cysteine 300 coordinates K(+). Catalysis depends on cysteine 300, which acts as the Thioimidate intermediate. Residues 333–335, 356–357, and 380–384 contribute to the IMP site; these read DGG, GS, and YRGMG. Catalysis depends on arginine 396, which acts as the Proton acceptor. Glutamate 410 serves as a coordination point for IMP. Residues glutamate 464, serine 465, and histidine 466 each coordinate K(+).

Belongs to the IMPDH/GMPR family. Homotetramer. Requires K(+) as cofactor.

It carries out the reaction IMP + NAD(+) + H2O = XMP + NADH + H(+). The protein operates within purine metabolism; XMP biosynthesis via de novo pathway; XMP from IMP: step 1/1. Its activity is regulated as follows. Mycophenolic acid (MPA) is a non-competitive inhibitor that prevents formation of the closed enzyme conformation by binding to the same site as the amobile flap. In contrast, mizoribine monophosphate (MZP) is a competitive inhibitor that induces the closed conformation. MPA is a potent inhibitor of mammalian IMPDHs but a poor inhibitor of the bacterial enzymes. MZP is a more potent inhibitor of bacterial IMPDH. Functionally, catalyzes the conversion of inosine 5'-phosphate (IMP) to xanthosine 5'-phosphate (XMP), the first committed and rate-limiting step in the de novo synthesis of guanine nucleotides, and therefore plays an important role in the regulation of cell growth. The polypeptide is Inosine-5'-monophosphate dehydrogenase (Helicobacter pylori (strain J99 / ATCC 700824) (Campylobacter pylori J99)).